Consider the following 902-residue polypeptide: Protein translocase subunit SecA (902 aa).

ATP is bound by residues Gln-87, 105–109, and Asp-512; that span reads GEGKT. The tract at residues 836–902 is disordered; that stretch reads DVEKVEEQHR…KFKQCCGKLK (67 aa). Basic and acidic residues predominate over residues 840–863; it reads VEEQHRKSENAPREYQHEEVEHVG. Zn(2+) is bound by residues Cys-886, Cys-888, Cys-897, and Cys-898.

Belongs to the SecA family. Monomer and homodimer. Part of the essential Sec protein translocation apparatus which comprises SecA, SecYEG and auxiliary proteins SecDF-YajC and YidC. Requires Zn(2+) as cofactor.

Its subcellular location is the cell inner membrane. It is found in the cytoplasm. The catalysed reaction is ATP + H2O + cellular proteinSide 1 = ADP + phosphate + cellular proteinSide 2.. Its function is as follows. Part of the Sec protein translocase complex. Interacts with the SecYEG preprotein conducting channel. Has a central role in coupling the hydrolysis of ATP to the transfer of proteins into and across the cell membrane, serving both as a receptor for the preprotein-SecB complex and as an ATP-driven molecular motor driving the stepwise translocation of polypeptide chains across the membrane. This chain is Protein translocase subunit SecA, found in Pseudoalteromonas translucida (strain TAC 125).